The chain runs to 270 residues: 3-methyl-2-oxobutanoate hydroxymethyltransferase (270 aa).

D53 and D92 together coordinate Mg(2+). 3-methyl-2-oxobutanoate-binding positions include 53 to 54 (DS), D92, and K120. E122 is a Mg(2+) binding site. Catalysis depends on E189, which acts as the Proton acceptor.

It belongs to the PanB family. As to quaternary structure, homodecamer; pentamer of dimers. The cofactor is Mg(2+).

Its subcellular location is the cytoplasm. The enzyme catalyses 3-methyl-2-oxobutanoate + (6R)-5,10-methylene-5,6,7,8-tetrahydrofolate + H2O = 2-dehydropantoate + (6S)-5,6,7,8-tetrahydrofolate. The protein operates within cofactor biosynthesis; (R)-pantothenate biosynthesis; (R)-pantoate from 3-methyl-2-oxobutanoate: step 1/2. Functionally, catalyzes the reversible reaction in which hydroxymethyl group from 5,10-methylenetetrahydrofolate is transferred onto alpha-ketoisovalerate to form ketopantoate. The chain is 3-methyl-2-oxobutanoate hydroxymethyltransferase from Saccharophagus degradans (strain 2-40 / ATCC 43961 / DSM 17024).